Consider the following 113-residue polypeptide: Large ribosomal subunit protein bL19 (113 aa).

Belongs to the bacterial ribosomal protein bL19 family.

Its function is as follows. This protein is located at the 30S-50S ribosomal subunit interface and may play a role in the structure and function of the aminoacyl-tRNA binding site. The protein is Large ribosomal subunit protein bL19 of Mycobacterium marinum (strain ATCC BAA-535 / M).